The chain runs to 548 residues: 5-aminolevulinate synthase, mitochondrial (548 aa).

The transit peptide at Met-1–Leu-22 directs the protein to the mitochondrion. Substrate-binding residues include Arg-91, Ser-204, and Lys-223. Positions 256, 284, and 334 each coordinate pyridoxal 5'-phosphate. The active site involves Lys-337. Lys-337 is subject to N6-(pyridoxal phosphate)lysine. Pyridoxal 5'-phosphate contacts are provided by Thr-366 and Thr-367. Thr-452 contacts substrate.

The protein belongs to the class-II pyridoxal-phosphate-dependent aminotransferase family. Homodimer. Interacts with MCX1. Pyridoxal 5'-phosphate serves as cofactor.

The protein resides in the mitochondrion matrix. The catalysed reaction is succinyl-CoA + glycine + H(+) = 5-aminolevulinate + CO2 + CoA. It functions in the pathway porphyrin-containing compound metabolism; protoporphyrin-IX biosynthesis; 5-aminolevulinate from glycine: step 1/1. Ihnhibited by hemin. Its function is as follows. Catalyzes the synthesis of 5-aminolevulinate (ALA) from succinyl-CoA and glycine, the first and rate-limiting step in heme biosynthesis. This chain is 5-aminolevulinate synthase, mitochondrial, found in Saccharomyces cerevisiae (strain ATCC 204508 / S288c) (Baker's yeast).